We begin with the raw amino-acid sequence, 410 residues long: Peptidase T (410 aa).

Residue H79 participates in Zn(2+) binding. D81 is a catalytic residue. D142 provides a ligand contact to Zn(2+). The active-site Proton acceptor is E176. Positions 177, 199, and 381 each coordinate Zn(2+).

The protein belongs to the peptidase M20B family. Requires Zn(2+) as cofactor.

Its subcellular location is the cytoplasm. The enzyme catalyses Release of the N-terminal residue from a tripeptide.. Its function is as follows. Cleaves the N-terminal amino acid of tripeptides. The protein is Peptidase T of Bacillus velezensis (strain DSM 23117 / BGSC 10A6 / LMG 26770 / FZB42) (Bacillus amyloliquefaciens subsp. plantarum).